Reading from the N-terminus, the 343-residue chain is Protein RecA (343 aa).

66–73 is an ATP binding site; it reads GPESSGKT.

Belongs to the RecA family.

The protein localises to the cytoplasm. Its function is as follows. Can catalyze the hydrolysis of ATP in the presence of single-stranded DNA, the ATP-dependent uptake of single-stranded DNA by duplex DNA, and the ATP-dependent hybridization of homologous single-stranded DNAs. It interacts with LexA causing its activation and leading to its autocatalytic cleavage. The protein is Protein RecA of Rickettsia bellii (strain OSU 85-389).